A 263-amino-acid polypeptide reads, in one-letter code: Triosephosphate isomerase (263 aa).

Position 10 to 12 (10 to 12 (NWK)) interacts with substrate. His104 serves as the catalytic Electrophile. Glu176 functions as the Proton acceptor in the catalytic mechanism. Residues Gly182, Ser221, and 242–243 (GG) contribute to the substrate site.

It belongs to the triosephosphate isomerase family. In terms of assembly, homodimer.

The protein resides in the cytoplasm. It carries out the reaction D-glyceraldehyde 3-phosphate = dihydroxyacetone phosphate. It functions in the pathway carbohydrate biosynthesis; gluconeogenesis. It participates in carbohydrate degradation; glycolysis; D-glyceraldehyde 3-phosphate from glycerone phosphate: step 1/1. In terms of biological role, involved in the gluconeogenesis. Catalyzes stereospecifically the conversion of dihydroxyacetone phosphate (DHAP) to D-glyceraldehyde-3-phosphate (G3P). This chain is Triosephosphate isomerase, found in Haemophilus influenzae (strain 86-028NP).